The chain runs to 139 residues: MTRDQVAEELPNLAESKLTALVVDDSFVNQTIHQKLLNRLGIKNDVVTNGKEAVDVYCSGGNYDLILMDMDMPIMNGIQATKRLREMGIESKIAGVTTRANEGEKKEFMEAGLNDFQEKPLTISKLLSILHKLNFYVQT.

The Response regulatory domain occupies 19-134 (TALVVDDSFV…KLLSILHKLN (116 aa)). Aspartate 69 carries the 4-aspartylphosphate modification.

This sequence belongs to the ARR family. Type-A subfamily. In terms of processing, two-component system major event consists of a His-to-Asp phosphorelay between a sensor histidine kinase (HK) and a response regulator (RR). In plants, the His-to-Asp phosphorelay involves an additional intermediate named Histidine-containing phosphotransfer protein (HPt). This multistep phosphorelay consists of a His-Asp-His-Asp sequential transfer of a phosphate group between first a His and an Asp of the HK protein, followed by the transfer to a conserved His of the HPt protein and finally the transfer to an Asp in the receiver domain of the RR protein. As to expression, mostly expressed in flowers and siliques, primarily restricted to pollen grains.

It localises to the nucleus. Functionally, functions as a response regulator involved in His-to-Asp phosphorelay signal transduction system. Phosphorylation of the Asp residue in the receiver domain activates the ability of the protein to promote the transcription of target genes. Type-A response regulators seem to act as negative regulators of the cytokinin signaling. This is Two-component response regulator 24 from Arabidopsis thaliana (Mouse-ear cress).